A 79-amino-acid chain; its full sequence is Small ribosomal subunit protein bS18 (79 aa).

It belongs to the bacterial ribosomal protein bS18 family. As to quaternary structure, part of the 30S ribosomal subunit. Forms a tight heterodimer with protein bS6.

Binds as a heterodimer with protein bS6 to the central domain of the 16S rRNA, where it helps stabilize the platform of the 30S subunit. The protein is Small ribosomal subunit protein bS18 of Bacillus licheniformis (strain ATCC 14580 / DSM 13 / JCM 2505 / CCUG 7422 / NBRC 12200 / NCIMB 9375 / NCTC 10341 / NRRL NRS-1264 / Gibson 46).